The following is a 1450-amino-acid chain: DNA-directed RNA polymerase RPB1 homolog (1450 aa).

It belongs to the RNA polymerase beta' chain family. Part of the viral DNA-directed RNA polymerase that consists of 8 polII-like subunits (RPB1, RPB2, RPB3, RPB5, RPB6, RPB7, RPB9, RPB10), a capping enzyme and a termination factor.

It is found in the virion. It carries out the reaction RNA(n) + a ribonucleoside 5'-triphosphate = RNA(n+1) + diphosphate. Its function is as follows. Catalytic component of the DNA-directed RNA polymerase (RNAP) that catalyzes the transcription in the cytoplasm of viral DNA into RNA using the four ribonucleoside triphosphates as substrates. Forms the polymerase active center together with RPB2. Part of the core element with the central large cleft, the clamp element that moves to open and close the cleft and the jaws that are thought to grab the incoming DNA template. This chain is DNA-directed RNA polymerase RPB1 homolog, found in Ornithodoros (relapsing fever ticks).